The sequence spans 195 residues: Imidazoleglycerol-phosphate dehydratase (195 aa).

The protein belongs to the imidazoleglycerol-phosphate dehydratase family.

It is found in the cytoplasm. It catalyses the reaction D-erythro-1-(imidazol-4-yl)glycerol 3-phosphate = 3-(imidazol-4-yl)-2-oxopropyl phosphate + H2O. The protein operates within amino-acid biosynthesis; L-histidine biosynthesis; L-histidine from 5-phospho-alpha-D-ribose 1-diphosphate: step 6/9. In Burkholderia multivorans (strain ATCC 17616 / 249), this protein is Imidazoleglycerol-phosphate dehydratase.